A 509-amino-acid chain; its full sequence is ATP synthase subunit beta (509 aa).

Residue 167-174 coordinates ATP; the sequence is GGAGVGKT. The segment at 476–509 is disordered; it reads ESLGAKMEDTSGDGAPAQSDSKSDSKGDDADKDA. The segment covering 496–509 has biased composition (basic and acidic residues); the sequence is SKSDSKGDDADKDA.

It belongs to the ATPase alpha/beta chains family. F-type ATPases have 2 components, CF(1) - the catalytic core - and CF(0) - the membrane proton channel. CF(1) has five subunits: alpha(3), beta(3), gamma(1), delta(1), epsilon(1). CF(0) has three main subunits: a(1), b(2) and c(9-12). The alpha and beta chains form an alternating ring which encloses part of the gamma chain. CF(1) is attached to CF(0) by a central stalk formed by the gamma and epsilon chains, while a peripheral stalk is formed by the delta and b chains.

It localises to the cell membrane. It carries out the reaction ATP + H2O + 4 H(+)(in) = ADP + phosphate + 5 H(+)(out). Functionally, produces ATP from ADP in the presence of a proton gradient across the membrane. The catalytic sites are hosted primarily by the beta subunits. This is ATP synthase subunit beta from Mycobacterium sp. (strain KMS).